Reading from the N-terminus, the 287-residue chain is Syntaxin-11 (287 aa).

Residues 41–71 are a coiled coil; it reads LESLYRDIRDIQDENQLLVADVKRLGKQNAR. In terms of domain architecture, t-SNARE coiled-coil homology spans 204-266; it reads LNEIESRHRE…GQAKAQVRKA (63 aa).

This sequence belongs to the syntaxin family. Interacts with the SNARE proteins SNAP-23 and VAMP.

The protein localises to the membrane. It is found in the golgi apparatus. It localises to the trans-Golgi network membrane. SNARE that acts to regulate protein transport between late endosomes and the trans-Golgi network. The sequence is that of Syntaxin-11 (STX11) from Homo sapiens (Human).